The chain runs to 1135 residues: Receptor-type guanylate cyclase gcy-4 (1135 aa).

Positions 1-20 (MTQLLRFLLILSIFCDFSHS) are cleaved as a signal peptide. Residues 21–483 (QRPTIRVGIA…CPIPFFDQYR (463 aa)) are Extracellular-facing. 9 N-linked (GlcNAc...) asparagine glycosylation sites follow: Asn37, Asn193, Asn209, Asn251, Asn349, Asn375, Asn431, Asn436, and Asn447. The chain crosses the membrane as a helical span at residues 484–504 (LLIFVFVIVAGLLILAIFTCL). Residues 505-1135 (TSMVRNQRAE…VMRREMMRVS (631 aa)) lie on the Cytoplasmic side of the membrane. Residues 535 to 560 (KGRRLSTDSENSTVTKSSKGSSSKNF) are disordered. Residues 545–837 (NSTVTKSSKG…KDNLMDHVFS (293 aa)) enclose the Protein kinase domain. The segment covering 546-560 (STVTKSSKGSSSKNF) has biased composition (low complexity). In terms of domain architecture, Guanylate cyclase spans 895–1025 (TVFFSDLVKF…DTVNTASRME (131 aa)).

The protein belongs to the adenylyl cyclase class-4/guanylyl cyclase family. Expressed bilaterally in ASE neurons.

It is found in the cell membrane. The catalysed reaction is GTP = 3',5'-cyclic GMP + diphosphate. Functionally, guanylate cyclase involved in the production of the second messenger cGMP. Regulates chemotaxis responses toward salt ions in ASE sensory neurons. The chain is Receptor-type guanylate cyclase gcy-4 from Caenorhabditis briggsae.